A 762-amino-acid polypeptide reads, in one-letter code: Cellulose synthase-like protein H2 (762 aa).

Residues Met1 to Arg15 are compositionally biased toward low complexity. The disordered stretch occupies residues Met1–Arg39. Helical transmembrane passes span Ala47–Leu67 and Gly81–Val101. Catalysis depends on residues Asp180 and Asp470. The next 6 membrane-spanning stretches (helical) occupy residues Leu541–Leu561, Phe582–Ala602, Ile619–Leu639, Leu673–Gly693, Ala708–Val728, and Gly739–Cys759.

Belongs to the glycosyltransferase 2 family. Plant cellulose synthase-like H subfamily.

It is found in the golgi apparatus membrane. Thought to be a Golgi-localized beta-glycan synthase that polymerize the backbones of noncellulosic polysaccharides (hemicelluloses) of plant cell wall. The sequence is that of Cellulose synthase-like protein H2 (CSLH2) from Oryza sativa subsp. japonica (Rice).